Consider the following 170-residue polypeptide: Myelin-associated oligodendrocyte basic protein (170 aa).

The tract at residues 69–170 (SRRATSPQRP…GSPTRAPRFW (102 aa)) is disordered. Low complexity predominate over residues 82–92 (PAASPVVVRAP). Phosphoserine is present on residues Ser85, Ser98, and Ser107. 2 consecutive repeat copies span residues 93-101 (PAKPKSPLM) and 105-110 (PRSPPR). The tract at residues 93–115 (PAKPKSPLMPAKPRSPPRPAKPR) is 3 X 9 AA approximate tandem repeats. Residues 111–115 (PAKPR) form a 3; half-length repeat. The segment covering 118 to 130 (SRTERQPRPRPEV) has biased composition (basic and acidic residues). The span at 138-151 (KPPQKSKQPARSSP) shows a compositional bias: low complexity.

It localises to the cytoplasm. The protein localises to the perinuclear region. Functionally, may play a role in compacting or stabilizing the myelin sheath possibly by binding the negatively charged acidic phospholipids of the cytoplasmic membrane. This Mus musculus (Mouse) protein is Myelin-associated oligodendrocyte basic protein (Mobp).